Consider the following 265-residue polypeptide: Putative carbamate hydrolase RutD (265 aa).

One can recognise an AB hydrolase-1 domain in the interval 21–123 (PILLSAGMGG…TIVNGWARAD (103 aa)).

Belongs to the AB hydrolase superfamily. Hydrolase RutD family.

It carries out the reaction carbamate + 2 H(+) = NH4(+) + CO2. Involved in pyrimidine catabolism. May facilitate the hydrolysis of carbamate, a reaction that can also occur spontaneously. The sequence is that of Putative carbamate hydrolase RutD from Azorhizobium caulinodans (strain ATCC 43989 / DSM 5975 / JCM 20966 / LMG 6465 / NBRC 14845 / NCIMB 13405 / ORS 571).